Here is an 811-residue protein sequence, read N- to C-terminus: N-terminal acetyltransferase B complex subunit arm1 (811 aa).

This sequence belongs to the MDM20/NAA25 family. As to quaternary structure, component of the N-terminal acetyltransferase B (NatB) complex.

Its subcellular location is the cytoplasm. In terms of biological role, non-catalytic subunit of the NatB N-terminal acetyltransferase, which catalyzes acetylation of the amino-terminal methionine residues of all proteins beginning with Met-Asp or Met-Glu and of some proteins beginning with Met-Asn or Met-Met. This is N-terminal acetyltransferase B complex subunit arm1 (arm1) from Schizosaccharomyces pombe (strain 972 / ATCC 24843) (Fission yeast).